The primary structure comprises 946 residues: Inter-alpha-trypsin inhibitor heavy chain H2 (946 aa).

The first 18 residues, 1–18 (MQRLACVLIWLFLLEEQA), serve as a signal peptide directing secretion. Residues 19–54 (FEIPANEYSEFAGYSNLVELAPDKFPFVQENRRYQR) constitute a propeptide that is removed on maturation. A VIT domain is found at 56–185 (LPEESGEMTD…KVQFELHYQE (130 aa)). Serine 60 is modified (phosphoserine). N-linked (GlcNAc...) asparagine glycans are attached at residues asparagine 118 and asparagine 263. 4-carboxyglutamate occurs at positions 282 and 283. A VWFA domain is found at 308–468 (PKNILFVIDV…YDFLKRLSNE (161 aa)). An N-linked (GlcNAc...) asparagine glycan is attached at asparagine 445. Phosphoserine is present on serine 466. Residue asparagine 578 is glycosylated (N-linked (GlcNAc...) asparagine). Aspartate 702 bears the Aspartate 1-(chondroitin 4-sulfate)-ester mark. A propeptide spanning residues 703-946 (PHFIIYLPKS…PQLYSFLKRP (244 aa)) is cleaved from the precursor. Residue serine 886 is modified to Phosphoserine.

The protein belongs to the ITIH family. I-alpha-I plasma protease inhibitors are assembled from one or two heavy chains (HC) and one light chain, bikunin. Inter-alpha-inhibitor (I-alpha-I) is composed of ITIH1/HC1, ITIH2/HC2 and bikunin. Heavy chains are linked to bikunin via chondroitin 4-sulfate esterified to the alpha-carboxyl of the C-terminal aspartate after propeptide cleavage. Post-translationally, phosphorylated by FAM20C in the extracellular medium.

The protein resides in the secreted. In terms of biological role, may act as a carrier of hyaluronan in serum or as a binding protein between hyaluronan and other matrix protein, including those on cell surfaces in tissues to regulate the localization, synthesis and degradation of hyaluronan which are essential to cells undergoing biological processes. This chain is Inter-alpha-trypsin inhibitor heavy chain H2 (ITIH2), found in Mesocricetus auratus (Golden hamster).